The primary structure comprises 490 residues: Glutamyl-tRNA(Gln) amidotransferase subunit A (490 aa).

Residues lysine 78 and serine 158 each act as charge relay system in the active site. Serine 182 functions as the Acyl-ester intermediate in the catalytic mechanism.

Belongs to the amidase family. GatA subfamily. Heterotrimer of A, B and C subunits.

The enzyme catalyses L-glutamyl-tRNA(Gln) + L-glutamine + ATP + H2O = L-glutaminyl-tRNA(Gln) + L-glutamate + ADP + phosphate + H(+). In terms of biological role, allows the formation of correctly charged Gln-tRNA(Gln) through the transamidation of misacylated Glu-tRNA(Gln) in organisms which lack glutaminyl-tRNA synthetase. The reaction takes place in the presence of glutamine and ATP through an activated gamma-phospho-Glu-tRNA(Gln). The protein is Glutamyl-tRNA(Gln) amidotransferase subunit A of Caulobacter sp. (strain K31).